Here is a 98-residue protein sequence, read N- to C-terminus: uncharacterized protein (98 aa).

The 55-residue stretch at 37–91 folds into the HTH cro/C1-type domain; sequence LITSRQQLGISQKQLETLSGVKQPMIARIEKGQTNPQLETLLKLLAPLGKTLSIV. The segment at residues 48-67 is a DNA-binding region (H-T-H motif); it reads QKQLETLSGVKQPMIARIEK.

This is an uncharacterized protein from Haemophilus influenzae (strain ATCC 51907 / DSM 11121 / KW20 / Rd).